The chain runs to 68 residues: Phosphatidylinositol N-acetylglucosaminyltransferase ERI1 subunit (68 aa).

Helical transmembrane passes span 8–28 (FLVL…FYWL) and 34–54 (FLHY…WALI).

In terms of assembly, component of the phosphatidylinositol N-acetylglucosaminyltransferase (GPI-GlcNAc transferase) complex composed of at least GPI1, GPI2, GPI3, GPI15, GPI19 and ERI1. Interacts with GPI2. Interacts with GTP-bound RAS2 in an effector loop-dependent manner.

The protein resides in the endoplasmic reticulum membrane. Its pathway is glycolipid biosynthesis; glycosylphosphatidylinositol-anchor biosynthesis. Functionally, probable component of the GPI-GlcNAc transferase (GPI-GnT) complex in the endoplasmic reticulum, a complex that catalyzes transfer of GlcNAc from UDP-GlcNAc to an acceptor phosphatidylinositol, the first step in the production of GPI-anchors for cell surface proteins. Ras may inhibit the enzyme activity of the GPI-GnT complex via the association between ERI1 and RAS2. This is Phosphatidylinositol N-acetylglucosaminyltransferase ERI1 subunit (ERI1) from Saccharomyces cerevisiae (strain ATCC 204508 / S288c) (Baker's yeast).